A 328-amino-acid chain; its full sequence is Telomere-binding protein cav (328 aa).

The interval Arg107 to Glu320 is required for binding to Su(var)205. The interval Asp139–Pro228 is disordered. Composition is skewed to polar residues over residues Gln144–Ser167 and Ala180–Gln189. 2 consecutive short sequence motifs (su(var)205-binding Pro-containing repeat) follow at residues Pro228 to Met232 and Pro281 to Glu287. The span at Ile295–Ser319 shows a compositional bias: polar residues. The segment at Ile295 to Ala328 is disordered.

As to quaternary structure, interacts (via C-terminus) with Su(var)205 dimer (via hinge and chromoshadow domain) and with moi to form the terminin, telomere-capping, complex. Interacts with HP6, which is also part of the terminin complex.

It is found in the nucleus. Its subcellular location is the chromosome. The protein resides in the telomere. In terms of biological role, binds to chromosome ends in a sequence-dependent manner and is required for telomere capping. The protein is Telomere-binding protein cav of Drosophila erecta (Fruit fly).